Consider the following 116-residue polypeptide: Ribulose bisphosphate carboxylase small subunit 1 (116 aa).

It belongs to the RuBisCO small chain family. As to quaternary structure, heterohexadecamer of 8 large and 8 small subunits.

The protein localises to the cytoplasm. In terms of biological role, ruBisCO catalyzes two reactions: the carboxylation of D-ribulose 1,5-bisphosphate, the primary event in carbon dioxide fixation, as well as the oxidative fragmentation of the pentose substrate. Both reactions occur simultaneously and in competition at the same active site. Although the small subunit is not catalytic it is essential for maximal activity. Its function is as follows. Can replace the endogenous type I ccbS gene in H.neapolitanus, reconstituting RuBisCO with about 10% of normal activity; the active enzyme is targeted to carboxysomes. This Hydrogenovibrio crunogenus (strain DSM 25203 / XCL-2) (Thiomicrospira crunogena) protein is Ribulose bisphosphate carboxylase small subunit 1.